Reading from the N-terminus, the 331-residue chain is tRNA N6-adenosine threonylcarbamoyltransferase (331 aa).

The Fe cation site is built by His-109, His-113, and Tyr-130. Residues 130 to 134 (YLSGG), Asp-162, Asp-183, and Ser-262 each bind substrate. Fe cation is bound at residue Asp-290.

This sequence belongs to the KAE1 / TsaD family. Requires Fe(2+) as cofactor.

The protein localises to the cytoplasm. It carries out the reaction L-threonylcarbamoyladenylate + adenosine(37) in tRNA = N(6)-L-threonylcarbamoyladenosine(37) in tRNA + AMP + H(+). Required for the formation of a threonylcarbamoyl group on adenosine at position 37 (t(6)A37) in tRNAs that read codons beginning with adenine. Is probably involved in the transfer of the threonylcarbamoyl moiety of threonylcarbamoyl-AMP (TC-AMP) to the N6 group of A37. The chain is tRNA N6-adenosine threonylcarbamoyltransferase from Metallosphaera sedula (strain ATCC 51363 / DSM 5348 / JCM 9185 / NBRC 15509 / TH2).